The following is a 1084-amino-acid chain: Carbamoyl phosphate synthase large chain (1084 aa).

The interval 1 to 401 is carboxyphosphate synthetic domain; sequence MPRRQDVEKV…ALLKAVRSLE (401 aa). 12 residues coordinate ATP: Arg129, Arg169, Gly175, Gly176, Arg208, Leu210, Glu215, Gly241, Val242, His243, Gln284, and Glu298. The ATP-grasp 1 domain occupies 133-327; it reads RALMKEIGEP…IAKVAAKIAV (195 aa). Mg(2+)-binding residues include Gln284, Glu298, and Asn300. The Mn(2+) site is built by Gln284, Glu298, and Asn300. The segment at 402–546 is oligomerization domain; the sequence is TGRDGLFHPA…YSCYDEENEA (145 aa). Positions 547-947 are carbamoyl phosphate synthetic domain; that stretch reads VSPPGRKAVV…ALYKALLASG (401 aa). The ATP-grasp 2 domain occupies 672–862; it reads DQLLSDLSIP…LAKVATQVIA (191 aa). Residues Arg708, Arg747, Glu753, Gly778, Val779, His780, Ser781, Gln821, and Glu833 each contribute to the ATP site. Residues Gln821, Glu833, and Asn835 each contribute to the Mg(2+) site. Residues Gln821, Glu833, and Asn835 each coordinate Mn(2+). The region spanning 948–1084 is the MGS-like domain; sequence VRVPHRGTVL…VGISAVQDWV (137 aa). The allosteric domain stretch occupies residues 948–1084; it reads VRVPHRGTVL…VGISAVQDWV (137 aa).

The protein belongs to the CarB family. In terms of assembly, composed of two chains; the small (or glutamine) chain promotes the hydrolysis of glutamine to ammonia, which is used by the large (or ammonia) chain to synthesize carbamoyl phosphate. Tetramer of heterodimers (alpha,beta)4. The cofactor is Mg(2+). Requires Mn(2+) as cofactor.

It catalyses the reaction hydrogencarbonate + L-glutamine + 2 ATP + H2O = carbamoyl phosphate + L-glutamate + 2 ADP + phosphate + 2 H(+). It carries out the reaction hydrogencarbonate + NH4(+) + 2 ATP = carbamoyl phosphate + 2 ADP + phosphate + 2 H(+). It functions in the pathway amino-acid biosynthesis; L-arginine biosynthesis; carbamoyl phosphate from bicarbonate: step 1/1. The protein operates within pyrimidine metabolism; UMP biosynthesis via de novo pathway; (S)-dihydroorotate from bicarbonate: step 1/3. Functionally, large subunit of the glutamine-dependent carbamoyl phosphate synthetase (CPSase). CPSase catalyzes the formation of carbamoyl phosphate from the ammonia moiety of glutamine, carbonate, and phosphate donated by ATP, constituting the first step of 2 biosynthetic pathways, one leading to arginine and/or urea and the other to pyrimidine nucleotides. The large subunit (synthetase) binds the substrates ammonia (free or transferred from glutamine from the small subunit), hydrogencarbonate and ATP and carries out an ATP-coupled ligase reaction, activating hydrogencarbonate by forming carboxy phosphate which reacts with ammonia to form carbamoyl phosphate. This is Carbamoyl phosphate synthase large chain from Symbiobacterium thermophilum (strain DSM 24528 / JCM 14929 / IAM 14863 / T).